The sequence spans 622 residues: Low affinity potassium transport system protein Kup (622 aa).

12 consecutive transmembrane segments (helical) span residues 9–29 (LPAV…TSPL), 49–69 (VFGF…LKYL), 101–121 (VLVI…VITP), 137–157 (PAMD…LFII), 165–185 (VGKL…VLGV), 212–232 (AVSF…EALY), 247–267 (WFTV…ALLL), 276–296 (PFFL…ATLA), 337–357 (IYIP…IVSF), 363–383 (LAAA…ILFC), 397–417 (AWVL…ANVV), and 419–439 (ILSG…IMTT).

It belongs to the HAK/KUP transporter (TC 2.A.72) family.

It is found in the cell inner membrane. It carries out the reaction K(+)(in) + H(+)(in) = K(+)(out) + H(+)(out). In terms of biological role, responsible for the low-affinity transport of potassium into the cell. Likely operates as a K(+):H(+) symporter. The chain is Low affinity potassium transport system protein Kup from Pectobacterium atrosepticum (strain SCRI 1043 / ATCC BAA-672) (Erwinia carotovora subsp. atroseptica).